Here is a 381-residue protein sequence, read N- to C-terminus: Beta-lactamase CMY-4 (381 aa).

The N-terminal stretch at 1-20 is a signal peptide; sequence MMKKSLCCALLLTASFSTFA. Ser-84 acts as the Acyl-ester intermediate in catalysis. 4 residues coordinate a beta-lactam: Ser-84, Gln-140, Tyr-170, and Asn-172.

The protein belongs to the class-C beta-lactamase family.

It carries out the reaction a beta-lactam + H2O = a substituted beta-amino acid. Class C beta-lactamase which confers resistance to penicillins and cephalosporins. The protein is Beta-lactamase CMY-4 of Klebsiella pneumoniae.